The following is a 193-amino-acid chain: Putative nucleotidase YqfW (193 aa).

Belongs to the 5'(3')-deoxyribonucleotidase family.

The sequence is that of Putative nucleotidase YqfW (yqfW) from Bacillus subtilis (strain 168).